We begin with the raw amino-acid sequence, 73 residues long: Lactogenin (73 aa).

Pyrrolidone carboxylic acid is present on Gln1.

Belongs to the pancreatic ribonuclease family. In terms of tissue distribution, milk.

The protein resides in the secreted. Functionally, secretory RNase specific towards pyrimidine bases, with higher activity towards poly C than poly U. Inhibits cell-free translation. This is Lactogenin from Bos taurus (Bovine).